The following is a 462-amino-acid chain: Sonic hedgehog protein (462 aa).

Residues Met-1–Ala-23 form the signal peptide. Cys-24 is lipidated: N-palmitoyl cysteine. Residues Lys-32 to Lys-38 carry the Cardin-Weintraub motif. Ca(2+)-binding residues include Glu-89, Glu-90, Asp-95, Thr-125, Glu-126, Asp-129, and Asp-131. His-140, Asp-147, and His-182 together coordinate Zn(2+). A lipid anchor (Cholesterol glycine ester) is attached at Gly-197. Asn-278 is a glycosylation site (N-linked (GlcNAc...) asparagine). Disordered stretches follow at residues Asp-279 to Arg-302 and Thr-395 to Ala-414. Positions Gly-283 to Gly-292 are enriched in low complexity. Residues Asp-400–Arg-412 are compositionally biased toward gly residues.

It belongs to the hedgehog family. As to quaternary structure, multimer. In terms of assembly, interacts with HHATL/GUP1 which negatively regulates HHAT-mediated palmitoylation of the SHH N-terminus. Interacts with BOC and CDON. Interacts with HHIP. Interacts with DISP1 via its cholesterol anchor. Interacts with SCUBE2. Interacts with glypican GPC3. The C-terminal domain displays an autoproteolysis activity and a cholesterol transferase activity. Both activities result in the cleavage of the full-length protein and covalent attachment of a cholesterol moiety to the C-terminal of the newly generated N-terminal fragment (ShhN). Cholesterylation is required for the sonic hedgehog protein N-product targeting to lipid rafts and multimerization. ShhN is the active species in both local and long-range signaling, whereas the C-product (ShhC) is degraded in the endoplasmic reticulum. In terms of processing, N-palmitoylation by HHAT of ShhN is required for sonic hedgehog protein N-product multimerization and full activity. It is a prerequisite for the membrane-proximal positioning and the subsequent shedding of this N-terminal peptide. Post-translationally, the lipidated N- and C-terminal peptides of ShhNp can be cleaved (shedding). The N-terminal palmitoylated peptide is cleaved at the Cardin-Weintraub (CW) motif site. The cleavage reduced the interactions with heparan sulfate. The cleavage is enhanced by SCUBE2.

Its subcellular location is the endoplasmic reticulum membrane. The protein resides in the golgi apparatus membrane. It localises to the secreted. The protein localises to the cell membrane. It carries out the reaction glycyl-L-cysteinyl-[protein] + cholesterol + H(+) = [protein]-C-terminal glycyl cholesterol ester + N-terminal L-cysteinyl-[protein]. Its function is as follows. The C-terminal part of the sonic hedgehog protein precursor displays an autoproteolysis and a cholesterol transferase activity. Both activities result in the cleavage of the full-length protein into two parts (ShhN and ShhC) followed by the covalent attachment of a cholesterol moiety to the C-terminal of the newly generated ShhN. Both activities occur in the endoplasmic reticulum. Once cleaved, ShhC is degraded in the endoplasmic reticulum. Functionally, the dually lipidated sonic hedgehog protein N-product (ShhNp) is a morphogen which is essential for a variety of patterning events during development. Induces ventral cell fate in the neural tube and somites. Involved in the patterning of the anterior-posterior axis of the developing limb bud. Essential for axon guidance. Binds to the patched (PTCH1) receptor, which functions in association with smoothened (SMO), to activate the transcription of target genes. In the absence of SHH, PTCH1 represses the constitutive signaling activity of SMO. This is Sonic hedgehog protein from Homo sapiens (Human).